A 130-amino-acid chain; its full sequence is Glycine cleavage system H protein (130 aa).

A Lipoyl-binding domain is found at 24 to 106; the sequence is GIKVGISAFA…YQEGWLLKIT (83 aa). Position 65 is an N6-lipoyllysine (Lys65).

It belongs to the GcvH family. In terms of assembly, the glycine cleavage system is composed of four proteins: P, T, L and H. (R)-lipoate serves as cofactor.

The glycine cleavage system catalyzes the degradation of glycine. The H protein shuttles the methylamine group of glycine from the P protein to the T protein. This is Glycine cleavage system H protein from Synechococcus sp. (strain RCC307).